Reading from the N-terminus, the 368-residue chain is Tubby-like F-box protein 2 (368 aa).

Residues 1–17 (MVPWRRSSSSSSAPSSR) show a composition bias toward low complexity. The tract at residues 1 to 44 (MVPWRRSSSSSSAPSSRPARRPARTNARVSPDVSSELSPLAGEE) is disordered. One can recognise an F-box domain in the interval 49–104 (ERWSALVPDLLADILRCVEAGSERWPPRRDVVACASVCRRWRDVAVAVVQPPLESG).

The protein belongs to the TUB family. As to expression, expressed in stems, leaves, flowers and seeds.

This Oryza sativa subsp. japonica (Rice) protein is Tubby-like F-box protein 2 (TULP2).